Consider the following 333-residue polypeptide: Testin-2 (333 aa).

The signal sequence occupies residues 1-17 (MIAVLFLAILCLEIDST). Disulfide bonds link cysteine 135-cysteine 178, cysteine 169-cysteine 211, and cysteine 269-cysteine 322. The N-linked (GlcNAc...) asparagine glycan is linked to asparagine 173. Active-site residues include histidine 276 and asparagine 300.

The protein belongs to the peptidase C1 family. In terms of tissue distribution, expressed in testis and ovary. Low level in spleen, epididymis, kidney, and uterus. Expressed in primary cultures of Sertoli cells.

The protein resides in the secreted. This chain is Testin-2, found in Mus musculus (Mouse).